The primary structure comprises 185 residues: Ribosomal RNA small subunit methyltransferase G (185 aa).

Residues glycine 59, phenylalanine 64, 110-111, and arginine 127 contribute to the S-adenosyl-L-methionine site; that span reads IQ.

This sequence belongs to the methyltransferase superfamily. RNA methyltransferase RsmG family.

Its subcellular location is the cytoplasm. The catalysed reaction is guanosine(527) in 16S rRNA + S-adenosyl-L-methionine = N(7)-methylguanosine(527) in 16S rRNA + S-adenosyl-L-homocysteine. Specifically methylates the N7 position of guanine in position 527 of 16S rRNA. The chain is Ribosomal RNA small subunit methyltransferase G from Helicobacter hepaticus (strain ATCC 51449 / 3B1).